A 304-amino-acid polypeptide reads, in one-letter code: Ribosomal RNA small subunit methyltransferase H (304 aa).

S-adenosyl-L-methionine is bound by residues Gly37 to His39, Asp57, Phe79, Asp100, and His107.

This sequence belongs to the methyltransferase superfamily. RsmH family.

The protein resides in the cytoplasm. The catalysed reaction is cytidine(1402) in 16S rRNA + S-adenosyl-L-methionine = N(4)-methylcytidine(1402) in 16S rRNA + S-adenosyl-L-homocysteine + H(+). Functionally, specifically methylates the N4 position of cytidine in position 1402 (C1402) of 16S rRNA. In Bacteroides fragilis (strain ATCC 25285 / DSM 2151 / CCUG 4856 / JCM 11019 / LMG 10263 / NCTC 9343 / Onslow / VPI 2553 / EN-2), this protein is Ribosomal RNA small subunit methyltransferase H.